A 512-amino-acid chain; its full sequence is Sodium/proline symporter (512 aa).

The next 13 membrane-spanning stretches (helical) occupy residues 16 to 36 (WQTYIMIAVYFLILIVIGFYG), 54 to 74 (IGPYITALSAGASDMSGWMIM), 85 to 105 (LSAMWITIGLTLGAYINYFVV), 139 to 159 (IISGLIIVVFFTLYTHSGFVS), 174 to 194 (FGLILVAFIVIFYTFFGGYLA), 200 to 220 (FFQGVIMLIAMVMVPIVAMMN), 240 to 260 (LFKGLSFIGIISLFSWGLGYF), 286 to 306 (ISWMAVGLLGAVAVGLTGIAF), 327 to 347 (VLFHPLVGGFLLAAILAAIMS), 381 to 401 (FVMIGRLSVLVVAIVAIAIAW), 410 to 430 (LVGNAWAGFGASFSPLVLFAL), 438 to 458 (AGAVSGMVSGALVVIVWIAWI), and 467 to 487 (IFGLYEIIPGFIVSVIVTYVV).

It belongs to the sodium:solute symporter (SSF) (TC 2.A.21) family.

The protein localises to the cell membrane. The enzyme catalyses L-proline(in) + Na(+)(in) = L-proline(out) + Na(+)(out). Catalyzes the sodium-dependent uptake of extracellular L-proline. Since most S.aureus strains are L-proline auxotrophs, this transporter may aid the bacterial persistence during an infection of tissues with low proline concentrations. This Staphylococcus aureus (strain Newman) protein is Sodium/proline symporter (putP).